Consider the following 389-residue polypeptide: Gastricsin (389 aa).

An N-terminal signal peptide occupies residues 1–16 (MKWMVVALVCLQLLEA). Positions 17–59 (KVTKVTLKKFKSIRENLREQGLLEDFLKTNHYDPAQKYHFGDF) are cleaved as a propeptide — activation peptide. A Peptidase A1 domain is found at 73-386 (YFGEISIGTP…DMGNNRVGFA (314 aa)). Aspartate 91 is an active-site residue. Disulfide bonds link cysteine 104–cysteine 109 and cysteine 268–cysteine 272. Aspartate 277 is an active-site residue. Cysteines 311 and 344 form a disulfide.

It belongs to the peptidase A1 family.

The protein localises to the secreted. It catalyses the reaction More restricted specificity than pepsin A, but shows preferential cleavage at Tyr-|-Xaa bonds. High activity on hemoglobin.. In terms of biological role, hydrolyzes a variety of proteins. The sequence is that of Gastricsin (PGC) from Suncus murinus (Asian house shrew).